We begin with the raw amino-acid sequence, 150 residues long: Arginine repressor (150 aa).

This sequence belongs to the ArgR family.

It is found in the cytoplasm. Its pathway is amino-acid biosynthesis; L-arginine biosynthesis [regulation]. Regulates arginine biosynthesis genes. This chain is Arginine repressor, found in Staphylococcus saprophyticus subsp. saprophyticus (strain ATCC 15305 / DSM 20229 / NCIMB 8711 / NCTC 7292 / S-41).